The sequence spans 548 residues: Synaptic vesicle 2-related protein (548 aa).

Residues 1 to 87 (MEDDLFQLRH…GFGKFQWKLS (87 aa)) lie on the Cytoplasmic side of the membrane. A helical membrane pass occupies residues 88-108 (MLTGLAWMADAMEMMILSILA). Residues 109-119 (PQLHCEWRLPS) are Vesicular-facing. A helical membrane pass occupies residues 120–140 (WQVALLTSVVFIGMMASSSLW). Topologically, residues 141–156 (GNVSDQYGRRTGLKIS) are cytoplasmic. Residues 157-177 (VIWTLYYGILSAFAPVYSWIL) form a helical membrane-spanning segment. Topologically, residues 178 to 180 (VLR) are vesicular. Residues 181–201 (GLVGFGIGGVPQSVTLYAEFL) traverse the membrane as a helical segment. The Cytoplasmic segment spans residues 202–209 (PMKSRAKC). A helical membrane pass occupies residues 210 to 230 (ILLIEIFWALGTVFEVLLAIF). Residues 231-238 (VMPTLGWR) lie on the Vesicular side of the membrane. A helical membrane pass occupies residues 239-259 (WLLILSALPLMLFAILCFWLP). Over 260-316 (ESARYEVLSGNQEKALATLKRIATENGAPMPLGKLIVSRQEDRGKIRDLFSPQFRCT) the chain is Cytoplasmic. A helical transmembrane segment spans residues 317 to 337 (TLLLWFIWFSNAFSYYGLVLL). Over 338 to 373 (TTELFQAGDVCSISNQRKAVKPKCSLACEYLTVEDY) the chain is Vesicular. A helical transmembrane segment spans residues 374–394 (TDLLWTTLSEFPGLLVTLWII). Residues 395 to 401 (DRVGRKK) lie on the Cytoplasmic side of the membrane. A helical membrane pass occupies residues 402–422 (TMAICFIIFSFSALLLFLCVG). Topologically, residues 423–424 (RN) are vesicular. Residues 425-445 (VLTVFLFIARAFISGGFQAAY) form a helical membrane-spanning segment. The Cytoplasmic portion of the chain corresponds to 446 to 457 (VYTPEVYPTATR). Residues 458 to 478 (ALGLGTCSGMARVGALITPFI) form a helical membrane-spanning segment. The Vesicular segment spans residues 479–486 (AQVMLESS). Residues 487–507 (IYLTVLVYSGCCVLAAVASCF) traverse the membrane as a helical segment. The Cytoplasmic portion of the chain corresponds to 508–548 (LPIETKGRGLQESSHREWGQEMVGRGTHNVGATPSHSGSQE). The segment at 519–548 (ESSHREWGQEMVGRGTHNVGATPSHSGSQE) is disordered. Residues 537 to 548 (VGATPSHSGSQE) are compositionally biased toward polar residues.

This sequence belongs to the major facilitator superfamily. As to expression, detected in embryonic trigeminal ganglion and spinal cord.

It localises to the cytoplasmic vesicle. The protein localises to the secretory vesicle. It is found in the synaptic vesicle membrane. The sequence is that of Synaptic vesicle 2-related protein (svop) from Xenopus laevis (African clawed frog).